Consider the following 113-residue polypeptide: Hydrogenase maturation factor HypA (113 aa).

Ni(2+) is bound at residue H2. Residues C73, C76, C89, and C92 each coordinate Zn(2+).

The protein belongs to the HypA/HybF family.

In terms of biological role, involved in the maturation of [NiFe] hydrogenases. Required for nickel insertion into the metal center of the hydrogenase. The chain is Hydrogenase maturation factor HypA from Chlorobaculum tepidum (strain ATCC 49652 / DSM 12025 / NBRC 103806 / TLS) (Chlorobium tepidum).